The following is a 303-amino-acid chain: Ribosomal protein L11 methyltransferase (303 aa).

S-adenosyl-L-methionine contacts are provided by Thr-144, Gly-165, Asp-187, and Asn-235.

The protein belongs to the methyltransferase superfamily. PrmA family.

The protein localises to the cytoplasm. It carries out the reaction L-lysyl-[protein] + 3 S-adenosyl-L-methionine = N(6),N(6),N(6)-trimethyl-L-lysyl-[protein] + 3 S-adenosyl-L-homocysteine + 3 H(+). Functionally, methylates ribosomal protein L11. The polypeptide is Ribosomal protein L11 methyltransferase (Prochlorococcus marinus (strain AS9601)).